Consider the following 320-residue polypeptide: MRSTNTRSARSRPTKRSVNASATPTQSFHRVDAHLSLLEGAEETGWVEFKTNTRVERIEQDADSVTVYDQNGNAYRGVALIGADGVRSVVRQTYVNDQPRVTGHVVYRAVVDKDEFPQDLRWNASSLWVGPKCHLVHYPLRGGEQYNIVVTFQSRQQEEWGVTEGSKEEVESYFQDICPKARQLIGLPKSWKRWATADREPIPQWTFGRTTLLGDAAHPTTQYMAQGACMALEDAVTLGEALRVHGNDWGKALDLYQRSRITRTARIVLSGREMGRLYHAQGVERLVRNSLWKGRTTEQFYDAIQWLYGWNVDNCLSESI.

Residues 1-25 form a disordered region; it reads MRSTNTRSARSRPTKRSVNASATPT. The span at 16-25 shows a compositional bias: polar residues; that stretch reads RSVNASATPT.

Belongs to the 3-hydroxybenzoate 6-hydroxylase family. It depends on FAD as a cofactor.

The catalysed reaction is 3-hydroxybenzoate + NADH + O2 + H(+) = 2,5-dihydroxybenzoate + NAD(+) + H2O. Catalyzes the conversion of 3-hydroxybenzoate to gentisate. The chain is 3-hydroxybenzoate 6-hydroxylase 2 (hbzD) from Aquipseudomonas alcaligenes (Pseudomonas alcaligenes).